The sequence spans 427 residues: Trigger factor (427 aa).

A PPIase FKBP-type domain is found at 163–248 (GDTAVIDFEG…VHEIKAKELP (86 aa)).

Belongs to the FKBP-type PPIase family. Tig subfamily.

The protein resides in the cytoplasm. The catalysed reaction is [protein]-peptidylproline (omega=180) = [protein]-peptidylproline (omega=0). Its function is as follows. Involved in protein export. Acts as a chaperone by maintaining the newly synthesized protein in an open conformation. Functions as a peptidyl-prolyl cis-trans isomerase. This Bacillus cytotoxicus (strain DSM 22905 / CIP 110041 / 391-98 / NVH 391-98) protein is Trigger factor.